The chain runs to 102 residues: NADH-quinone oxidoreductase subunit K (102 aa).

3 helical membrane passes run 5-25, 31-51, and 65-85; these read LSHYLTVSAILFTLGVFGIFL, IVILMSIELILLAVNINMVAF, and LFILTVAAAEAAIGLAILVVF.

This sequence belongs to the complex I subunit 4L family. In terms of assembly, NDH-1 is composed of 14 different subunits. Subunits NuoA, H, J, K, L, M, N constitute the membrane sector of the complex.

It is found in the cell inner membrane. The enzyme catalyses a quinone + NADH + 5 H(+)(in) = a quinol + NAD(+) + 4 H(+)(out). NDH-1 shuttles electrons from NADH, via FMN and iron-sulfur (Fe-S) centers, to quinones in the respiratory chain. The immediate electron acceptor for the enzyme in this species is believed to be ubiquinone. Couples the redox reaction to proton translocation (for every two electrons transferred, four hydrogen ions are translocated across the cytoplasmic membrane), and thus conserves the redox energy in a proton gradient. The polypeptide is NADH-quinone oxidoreductase subunit K (Rhizobium johnstonii (strain DSM 114642 / LMG 32736 / 3841) (Rhizobium leguminosarum bv. viciae)).